A 239-amino-acid polypeptide reads, in one-letter code: Phosphoribosylaminoimidazole-succinocarboxamide synthase (239 aa).

The protein belongs to the SAICAR synthetase family.

The enzyme catalyses 5-amino-1-(5-phospho-D-ribosyl)imidazole-4-carboxylate + L-aspartate + ATP = (2S)-2-[5-amino-1-(5-phospho-beta-D-ribosyl)imidazole-4-carboxamido]succinate + ADP + phosphate + 2 H(+). The protein operates within purine metabolism; IMP biosynthesis via de novo pathway; 5-amino-1-(5-phospho-D-ribosyl)imidazole-4-carboxamide from 5-amino-1-(5-phospho-D-ribosyl)imidazole-4-carboxylate: step 1/2. The chain is Phosphoribosylaminoimidazole-succinocarboxamide synthase from Chlorobium luteolum (strain DSM 273 / BCRC 81028 / 2530) (Pelodictyon luteolum).